The sequence spans 490 residues: Protein nucleotidyltransferase YdiU (490 aa).

Residues Gly-94, Gly-96, Arg-97, Lys-117, Asp-129, Gly-130, Arg-180, and Arg-187 each contribute to the ATP site. Asp-256 (proton acceptor) is an active-site residue. The Mg(2+) site is built by Asn-257 and Asp-266. Residue Asp-266 coordinates ATP.

The protein belongs to the SELO family. Requires Mg(2+) as cofactor. The cofactor is Mn(2+).

The enzyme catalyses L-seryl-[protein] + ATP = 3-O-(5'-adenylyl)-L-seryl-[protein] + diphosphate. The catalysed reaction is L-threonyl-[protein] + ATP = 3-O-(5'-adenylyl)-L-threonyl-[protein] + diphosphate. It catalyses the reaction L-tyrosyl-[protein] + ATP = O-(5'-adenylyl)-L-tyrosyl-[protein] + diphosphate. It carries out the reaction L-histidyl-[protein] + UTP = N(tele)-(5'-uridylyl)-L-histidyl-[protein] + diphosphate. The enzyme catalyses L-seryl-[protein] + UTP = O-(5'-uridylyl)-L-seryl-[protein] + diphosphate. The catalysed reaction is L-tyrosyl-[protein] + UTP = O-(5'-uridylyl)-L-tyrosyl-[protein] + diphosphate. In terms of biological role, nucleotidyltransferase involved in the post-translational modification of proteins. It can catalyze the addition of adenosine monophosphate (AMP) or uridine monophosphate (UMP) to a protein, resulting in modifications known as AMPylation and UMPylation. The sequence is that of Protein nucleotidyltransferase YdiU from Clostridium beijerinckii (strain ATCC 51743 / NCIMB 8052) (Clostridium acetobutylicum).